The following is a 790-amino-acid chain: von Willebrand factor A domain-containing protein 2 (790 aa).

An N-terminal signal peptide occupies residues 1–22; sequence MRLPWVNGILAFLSSQVLQCLC. Residues 50-221 form the VWFA 1 domain; the sequence is DILILLDGSN…DAVNGLATSL (172 aa). The EGF-like 1 domain maps to 295-332; the sequence is PDPCDSQPCKNGGTCIAEGQDKYHCVCPAGFGGDTECA. 3 cysteine pairs are disulfide-bonded: Cys-298–Cys-309, Cys-303–Cys-319, and Cys-321–Cys-331. VWFA domains lie at 342–518 and 532–702; these read DLLF…QKRI and DLAF…EDSV. In terms of domain architecture, EGF-like 2 spans 713–748; it reads PVNLCKPNPCMNDGVCILRQGSYRCDCRGWDGPHCE. 3 cysteine pairs are disulfide-bonded: Cys-717-Cys-728, Cys-722-Cys-737, and Cys-739-Cys-747. Residues 758–790 are disordered; that stretch reads WPQGLHSRSRQQRHSRKRRLKSVSGSRSSRKKP. Positions 764–778 are enriched in basic residues; that stretch reads SRSRQQRHSRKRRLK.

Forms monomers and multimers.

The protein localises to the secreted. In Xenopus laevis (African clawed frog), this protein is von Willebrand factor A domain-containing protein 2 (vwa2).